A 261-amino-acid chain; its full sequence is Thioesterase TesA (261 aa).

Positions 1 to 24 are disordered; it reads MLARHGPRYGGSVNGHSDDSSGDA. Active-site residues include S104, D208, and H236.

This sequence belongs to the thioesterase family.

The catalysed reaction is a fatty acyl-CoA + H2O = a fatty acid + CoA + H(+). Its function is as follows. Involved in the synthesis of both phthiocerol dimycocerosates (PDIMs) and phenolic glycolipids (PGLs), which are structurally related lipids non-covalently bound to the outer cell wall layer of M.tuberculosis and are important virulence factors. The polypeptide is Thioesterase TesA (tesA) (Mycobacterium bovis (strain ATCC BAA-935 / AF2122/97)).